The chain runs to 431 residues: Serine--tRNA ligase (431 aa).

Residue threonine 235–glutamate 237 participates in L-serine binding. Residues arginine 266–glutamate 268 and valine 282 contribute to the ATP site. L-serine is bound at residue glutamate 289. Glutamate 353–serine 356 provides a ligand contact to ATP. Serine 389 is a binding site for L-serine.

This sequence belongs to the class-II aminoacyl-tRNA synthetase family. Type-1 seryl-tRNA synthetase subfamily. Homodimer. The tRNA molecule binds across the dimer.

It is found in the cytoplasm. The enzyme catalyses tRNA(Ser) + L-serine + ATP = L-seryl-tRNA(Ser) + AMP + diphosphate + H(+). It catalyses the reaction tRNA(Sec) + L-serine + ATP = L-seryl-tRNA(Sec) + AMP + diphosphate + H(+). Its pathway is aminoacyl-tRNA biosynthesis; selenocysteinyl-tRNA(Sec) biosynthesis; L-seryl-tRNA(Sec) from L-serine and tRNA(Sec): step 1/1. Catalyzes the attachment of serine to tRNA(Ser). Is also able to aminoacylate tRNA(Sec) with serine, to form the misacylated tRNA L-seryl-tRNA(Sec), which will be further converted into selenocysteinyl-tRNA(Sec). The sequence is that of Serine--tRNA ligase from Chlorobium phaeobacteroides (strain DSM 266 / SMG 266 / 2430).